The chain runs to 255 residues: MVTDKSKKAKTEEENVEQIDAELVLSIEKLQEIQDDLEKINEKASDEVLEVEQKYNVIRKPVYDKRNEIIKTIPDFWLTAFLSHPALGELLTEEDQKIFKYLSSLDVEDAKDVKSGYSITFSFNPNPFFEDGKLTKTFTFLEEGTTKITATPIKWKEGKGLANGVNHEKNGNKRALPEESFFTWFSDAQHKEDVEDEMQDEVADIIKEDLWPNPLTYFNNDADEEDFDGDDDGDEEEKEGDSDEDDDEEDEVGEE.

Residues 19 to 60 (IDAELVLSIEKLQEIQDDLEKINEKASDEVLEVEQKYNVIRK) adopt a coiled-coil conformation. The tract at residues 213 to 255 (NPLTYFNNDADEEDFDGDDDGDEEEKEGDSDEDDDEEDEVGEE) is disordered. Over residues 221–255 (DADEEDFDGDDDGDEEEKEGDSDEDDDEEDEVGEE) the composition is skewed to acidic residues.

This sequence belongs to the nucleosome assembly protein (NAP) family. Can form homomeric and heteromeric protein complexes with NRP1. Binds histones H2A and H2B and associates with chromatin in vivo. As to expression, ubiquitous.

The protein localises to the cytoplasm. It localises to the nucleus. Its function is as follows. Acts as a histone H2A/H2B chaperone in nucleosome assembly, playing a critical role for the correct expression of genes involved in root proliferation and patterning. Required with NRP1 for the maintenance of cell proliferation and differentiation in postembryonic root growth. Involved in both intramolecular and intermolecular somatic homologous recombination. In Arabidopsis thaliana (Mouse-ear cress), this protein is NAP1-related protein 2 (NRP2).